Reading from the N-terminus, the 264-residue chain is Thymidylate synthase (264 aa).

Residue Arg-21 participates in dUMP binding. A (6R)-5,10-methylene-5,6,7,8-tetrahydrofolate-binding site is contributed by His-51. 126 to 127 serves as a coordination point for dUMP; that stretch reads RR. Catalysis depends on Cys-146, which acts as the Nucleophile. Residues 166-169, Asn-177, and 207-209 each bind dUMP; these read RSCD and HLY. Position 169 (Asp-169) interacts with (6R)-5,10-methylene-5,6,7,8-tetrahydrofolate. Ser-263 is a binding site for (6R)-5,10-methylene-5,6,7,8-tetrahydrofolate.

This sequence belongs to the thymidylate synthase family. Bacterial-type ThyA subfamily. In terms of assembly, homodimer.

It localises to the cytoplasm. It catalyses the reaction dUMP + (6R)-5,10-methylene-5,6,7,8-tetrahydrofolate = 7,8-dihydrofolate + dTMP. Its pathway is pyrimidine metabolism; dTTP biosynthesis. Catalyzes the reductive methylation of 2'-deoxyuridine-5'-monophosphate (dUMP) to 2'-deoxythymidine-5'-monophosphate (dTMP) while utilizing 5,10-methylenetetrahydrofolate (mTHF) as the methyl donor and reductant in the reaction, yielding dihydrofolate (DHF) as a by-product. This enzymatic reaction provides an intracellular de novo source of dTMP, an essential precursor for DNA biosynthesis. This Buchnera aphidicola subsp. Schizaphis graminum (strain Sg) protein is Thymidylate synthase.